Consider the following 90-residue polypeptide: Probable Fe(2+)-trafficking protein (90 aa).

It belongs to the Fe(2+)-trafficking protein family.

Its function is as follows. Could be a mediator in iron transactions between iron acquisition and iron-requiring processes, such as synthesis and/or repair of Fe-S clusters in biosynthetic enzymes. This is Probable Fe(2+)-trafficking protein from Actinobacillus succinogenes (strain ATCC 55618 / DSM 22257 / CCUG 43843 / 130Z).